A 912-amino-acid chain; its full sequence is Protein translocase subunit SecA (912 aa).

Residues glutamine 87, 105 to 109, and aspartate 508 contribute to the ATP site; that span reads GEGKT. Positions 865–912 are disordered; the sequence is DEEAAQVQSGNAPVPVSQVTRDEPKVGRNDPCPCGSGKKYKHCHGQLS. Cysteine 896, cysteine 898, cysteine 907, and histidine 908 together coordinate Zn(2+). A compositionally biased stretch (basic residues) spans 902–912; the sequence is KKYKHCHGQLS.

The protein belongs to the SecA family. As to quaternary structure, monomer and homodimer. Part of the essential Sec protein translocation apparatus which comprises SecA, SecYEG and auxiliary proteins SecDF-YajC and YidC. The cofactor is Zn(2+).

The protein localises to the cell inner membrane. It is found in the cytoplasm. The enzyme catalyses ATP + H2O + cellular proteinSide 1 = ADP + phosphate + cellular proteinSide 2.. In terms of biological role, part of the Sec protein translocase complex. Interacts with the SecYEG preprotein conducting channel. Has a central role in coupling the hydrolysis of ATP to the transfer of proteins into and across the cell membrane, serving both as a receptor for the preprotein-SecB complex and as an ATP-driven molecular motor driving the stepwise translocation of polypeptide chains across the membrane. The sequence is that of Protein translocase subunit SecA from Xanthomonas oryzae pv. oryzae (strain MAFF 311018).